Here is a 236-residue protein sequence, read N- to C-terminus: 2,3,4,5-tetrahydropyridine-2,6-dicarboxylate N-acetyltransferase (236 aa).

It belongs to the transferase hexapeptide repeat family. DapH subfamily.

It carries out the reaction (S)-2,3,4,5-tetrahydrodipicolinate + acetyl-CoA + H2O = L-2-acetamido-6-oxoheptanedioate + CoA. The protein operates within amino-acid biosynthesis; L-lysine biosynthesis via DAP pathway; LL-2,6-diaminopimelate from (S)-tetrahydrodipicolinate (acetylase route): step 1/3. Catalyzes the transfer of an acetyl group from acetyl-CoA to tetrahydrodipicolinate. In Clostridium botulinum (strain Okra / Type B1), this protein is 2,3,4,5-tetrahydropyridine-2,6-dicarboxylate N-acetyltransferase.